Here is a 586-residue protein sequence, read N- to C-terminus: Aspartate--tRNA(Asp/Asn) ligase (586 aa).

E172 lines the L-aspartate pocket. The interval Q196 to K199 is aspartate. R218 contacts L-aspartate. Residues R218–E220 and Q227 contribute to the ATP site. H446 is a binding site for L-aspartate. An ATP-binding site is contributed by E480. R487 serves as a coordination point for L-aspartate. G532–R535 provides a ligand contact to ATP.

The protein belongs to the class-II aminoacyl-tRNA synthetase family. Type 1 subfamily. In terms of assembly, homodimer.

The protein localises to the cytoplasm. It catalyses the reaction tRNA(Asx) + L-aspartate + ATP = L-aspartyl-tRNA(Asx) + AMP + diphosphate. Its function is as follows. Aspartyl-tRNA synthetase with relaxed tRNA specificity since it is able to aspartylate not only its cognate tRNA(Asp) but also tRNA(Asn). Reaction proceeds in two steps: L-aspartate is first activated by ATP to form Asp-AMP and then transferred to the acceptor end of tRNA(Asp/Asn). This is Aspartate--tRNA(Asp/Asn) ligase from Borreliella burgdorferi (strain ATCC 35210 / DSM 4680 / CIP 102532 / B31) (Borrelia burgdorferi).